A 197-amino-acid polypeptide reads, in one-letter code: Holliday junction branch migration complex subunit RuvA (197 aa).

Positions 1 to 63 (MFEYLNGKLV…EDAHSLYGFV (63 aa)) are domain I. The segment at 64–142 (NEAEKALFLR…ATGTVGISLL (79 aa)) is domain II. The interval 142–146 (LDAGP) is flexible linker. The segment at 147 to 197 (AGNLALEEAIEALQALGYKATELKKIEKKLAQETGLTSEEYIKSALKLMMK) is domain III.

This sequence belongs to the RuvA family. In terms of assembly, homotetramer. Forms an RuvA(8)-RuvB(12)-Holliday junction (HJ) complex. HJ DNA is sandwiched between 2 RuvA tetramers; dsDNA enters through RuvA and exits via RuvB. An RuvB hexamer assembles on each DNA strand where it exits the tetramer. Each RuvB hexamer is contacted by two RuvA subunits (via domain III) on 2 adjacent RuvB subunits; this complex drives branch migration. In the full resolvosome a probable DNA-RuvA(4)-RuvB(12)-RuvC(2) complex forms which resolves the HJ.

The protein resides in the cytoplasm. The RuvA-RuvB-RuvC complex processes Holliday junction (HJ) DNA during genetic recombination and DNA repair, while the RuvA-RuvB complex plays an important role in the rescue of blocked DNA replication forks via replication fork reversal (RFR). RuvA specifically binds to HJ cruciform DNA, conferring on it an open structure. The RuvB hexamer acts as an ATP-dependent pump, pulling dsDNA into and through the RuvAB complex. HJ branch migration allows RuvC to scan DNA until it finds its consensus sequence, where it cleaves and resolves the cruciform DNA. The polypeptide is Holliday junction branch migration complex subunit RuvA (Lactococcus lactis subsp. lactis (strain IL1403) (Streptococcus lactis)).